The sequence spans 684 residues: Protein SEEDLING PLASTID DEVELOPMENT 1 (684 aa).

A chloroplast-targeting transit peptide spans 1-78 (MRALNSRLVL…FSFDVRSPSS (78 aa)). The disordered stretch occupies residues 33-91 (SDSSSSFRRTRGARQRIASSKSPASSPSPVRRPSDGFSFDVRSPSSDSSISSRKSPTTA). Residues 50 to 88 (ASSKSPASSPSPVRRPSDGFSFDVRSPSSDSSISSRKSP) show a composition bias toward low complexity. Residue 220-227 (GSPGVGKT) participates in ATP binding. The disordered stretch occupies residues 651 to 684 (PRRSTKKTLTSSSPQKSADGSMGTTGTRLPFLKD). Residues 657–667 (KTLTSSSPQKS) are compositionally biased toward low complexity.

Belongs to the ycf45 family.

It localises to the plastid. It is found in the chloroplast membrane. The protein localises to the chloroplast envelope. Required during eoplast (a highly reduced plastid type present during the degreening and dehydration stages of seed maturation) development in embryos and early stages of eoplast redifferentiation during seedling growth. In Arabidopsis thaliana (Mouse-ear cress), this protein is Protein SEEDLING PLASTID DEVELOPMENT 1.